The chain runs to 221 residues: MKRLAGTVILSGLLVCGFGQALPEKALAAEVVHKTIVVEKGQTYDGKGKRLIAGPELGDGSQREDQKPIFKVEDGATLKNVVLGAPAADGVHTYGNASINNVVWEDVGEDALTVKSEGSVTINGGSARLAADKIFQINKASTFTVKNFTADQGGKFIRQLGGSTFKAVVNIDNCTITNMKEAIFRTDSSTSSVTMTNTRYSKVGQKWIGVKHATERNNHEF.

A signal peptide spans Met1–Ala28.

The protein belongs to the polysaccharide lyase 3 family. It depends on Ca(2+) as a cofactor.

Its subcellular location is the secreted. The catalysed reaction is Eliminative cleavage of (1-&gt;4)-alpha-D-galacturonan to give oligosaccharides with 4-deoxy-alpha-D-galact-4-enuronosyl groups at their non-reducing ends.. It catalyses the reaction Eliminative cleavage of (1-&gt;4)-alpha-D-galacturonan methyl ester to give oligosaccharides with 4-deoxy-6-O-methyl-alpha-D-galact-4-enuronosyl groups at their non-reducing ends.. The protein operates within glycan metabolism; pectin degradation; 2-dehydro-3-deoxy-D-gluconate from pectin: step 2/5. Its function is as follows. Catalyzes the depolymerization of both polygalacturonate and pectins of methyl esterification degree from 22 to 89%, with an endo mode of action. In contrast to the majority of pectate lyases, displays high activity on highly methylated pectins. This is Pectate lyase C (pelC) from Bacillus licheniformis (strain ATCC 14580 / DSM 13 / JCM 2505 / CCUG 7422 / NBRC 12200 / NCIMB 9375 / NCTC 10341 / NRRL NRS-1264 / Gibson 46).